The chain runs to 478 residues: Serralysin C (478 aa).

A propeptide spanning residues 1 to 17 is cleaved from the precursor; sequence MEKNLSSRDDDALHSLS. His-187 contacts Zn(2+). Residue Glu-188 is part of the active site. Positions 191 and 227 each coordinate Zn(2+). 30 residues coordinate Ca(2+): Arg-264, Gly-266, Asp-296, Gly-298, Gly-299, Asp-301, Thr-338, Glu-340, Gly-345, Gly-347, Asp-349, Asn-354, Ala-356, Asn-358, Gly-362, Gly-363, Ala-364, Gly-365, Asp-367, Gly-371, Gly-372, Gly-374, Asp-376, Gly-380, Gly-381, Gly-383, Asp-385, Asp-394, Asp-401, and Asp-411. Hemolysin-type calcium-binding repeat units follow at residues 343–360 and 361–378; these read IGGS…DNTL and RGGA…ADRL.

It belongs to the peptidase M10B family. It depends on Ca(2+) as a cofactor. Zn(2+) serves as cofactor.

It localises to the secreted. It catalyses the reaction Preferential cleavage of bonds with hydrophobic residues in P1'.. This is Serralysin C (prtC) from Dickeya chrysanthemi (Pectobacterium chrysanthemi).